Here is a 127-residue protein sequence, read N- to C-terminus: Small ribosomal subunit protein uS13 (127 aa).

The segment at 90 to 127 is disordered; the sequence is KRHREGLPVNGQRTRTNARTRKGKRKTVAGRSQSTQKK. Positions 105–117 are enriched in basic residues; that stretch reads TNARTRKGKRKTV.

It belongs to the universal ribosomal protein uS13 family. In terms of assembly, part of the 30S ribosomal subunit. Forms a loose heterodimer with protein S19. Forms two bridges to the 50S subunit in the 70S ribosome.

Functionally, located at the top of the head of the 30S subunit, it contacts several helices of the 16S rRNA. In the 70S ribosome it contacts the 23S rRNA (bridge B1a) and protein L5 of the 50S subunit (bridge B1b), connecting the 2 subunits; these bridges are implicated in subunit movement. Contacts the tRNAs in the A and P-sites. This is Small ribosomal subunit protein uS13 from Salinibacter ruber (strain DSM 13855 / M31).